The sequence spans 690 residues: Amino-acid acetyltransferase, mitochondrial (690 aa).

The tract at residues 62-93 (RFPSVKKPKPPIPRQNQGAVETQSGKENEKPG) is disordered. The span at 75-84 (RQNQGAVETQ) shows a compositional bias: polar residues. Positions 508–679 (DGHHLTLDDP…DYEAVCRSIQ (172 aa)) constitute an N-acetyltransferase domain.

This sequence belongs to the acetyltransferase family.

The protein localises to the mitochondrion. It catalyses the reaction L-glutamate + acetyl-CoA = N-acetyl-L-glutamate + CoA + H(+). It functions in the pathway amino-acid biosynthesis; L-arginine biosynthesis; N(2)-acetyl-L-ornithine from L-glutamate: step 1/4. Its function is as follows. N-acetylglutamate synthase involved in arginine biosynthesis. The polypeptide is Amino-acid acetyltransferase, mitochondrial (arg2) (Talaromyces stipitatus (strain ATCC 10500 / CBS 375.48 / QM 6759 / NRRL 1006) (Penicillium stipitatum)).